We begin with the raw amino-acid sequence, 100 residues long: Aspartyl/glutamyl-tRNA(Asn/Gln) amidotransferase subunit C (100 aa).

Belongs to the GatC family. In terms of assembly, heterotrimer of A, B and C subunits.

The catalysed reaction is L-glutamyl-tRNA(Gln) + L-glutamine + ATP + H2O = L-glutaminyl-tRNA(Gln) + L-glutamate + ADP + phosphate + H(+). The enzyme catalyses L-aspartyl-tRNA(Asn) + L-glutamine + ATP + H2O = L-asparaginyl-tRNA(Asn) + L-glutamate + ADP + phosphate + 2 H(+). In terms of biological role, allows the formation of correctly charged Asn-tRNA(Asn) or Gln-tRNA(Gln) through the transamidation of misacylated Asp-tRNA(Asn) or Glu-tRNA(Gln) in organisms which lack either or both of asparaginyl-tRNA or glutaminyl-tRNA synthetases. The reaction takes place in the presence of glutamine and ATP through an activated phospho-Asp-tRNA(Asn) or phospho-Glu-tRNA(Gln). This chain is Aspartyl/glutamyl-tRNA(Asn/Gln) amidotransferase subunit C, found in Streptococcus pyogenes serotype M18 (strain MGAS8232).